Consider the following 170-residue polypeptide: MGSTDGKIAIYPGTFDPLTNGHASLIQRGCQIFDHIVVAVANDTPKTPLFTIDERVQMAQEALEGVGSITVEPFSGLLVDYAERRGAGVILRGLRAVSDFEYEFQLALMNRKMKRHIQTVFLMTDYKWLYISSTIIKAAASLGGDIKGLVPDNVYRRLREKYGYPYPLNG.

A substrate-binding site is contributed by threonine 14. Residues 14–15 and histidine 22 contribute to the ATP site; that span reads TF. The substrate site is built by lysine 46, leucine 78, and arginine 92. Residues 93–95, glutamate 103, and 128–134 contribute to the ATP site; these read GLR and WLYISST.

This sequence belongs to the bacterial CoaD family. As to quaternary structure, homohexamer. Mg(2+) serves as cofactor.

Its subcellular location is the cytoplasm. It carries out the reaction (R)-4'-phosphopantetheine + ATP + H(+) = 3'-dephospho-CoA + diphosphate. It participates in cofactor biosynthesis; coenzyme A biosynthesis; CoA from (R)-pantothenate: step 4/5. Reversibly transfers an adenylyl group from ATP to 4'-phosphopantetheine, yielding dephospho-CoA (dPCoA) and pyrophosphate. This chain is Phosphopantetheine adenylyltransferase, found in Oleidesulfovibrio alaskensis (strain ATCC BAA-1058 / DSM 17464 / G20) (Desulfovibrio alaskensis).